The chain runs to 347 residues: 4-hydroxy-3-methylbut-2-en-1-yl diphosphate synthase (flavodoxin) (347 aa).

Residues C259, C262, C294, and E301 each contribute to the [4Fe-4S] cluster site.

The protein belongs to the IspG family. Requires [4Fe-4S] cluster as cofactor.

The enzyme catalyses (2E)-4-hydroxy-3-methylbut-2-enyl diphosphate + oxidized [flavodoxin] + H2O + 2 H(+) = 2-C-methyl-D-erythritol 2,4-cyclic diphosphate + reduced [flavodoxin]. It participates in isoprenoid biosynthesis; isopentenyl diphosphate biosynthesis via DXP pathway; isopentenyl diphosphate from 1-deoxy-D-xylulose 5-phosphate: step 5/6. Functionally, converts 2C-methyl-D-erythritol 2,4-cyclodiphosphate (ME-2,4cPP) into 1-hydroxy-2-methyl-2-(E)-butenyl 4-diphosphate. The polypeptide is 4-hydroxy-3-methylbut-2-en-1-yl diphosphate synthase (flavodoxin) (Caldicellulosiruptor saccharolyticus (strain ATCC 43494 / DSM 8903 / Tp8T 6331)).